Here is a 335-residue protein sequence, read N- to C-terminus: Anthranilate phosphoribosyltransferase (335 aa).

5-phospho-alpha-D-ribose 1-diphosphate-binding positions include Gly-79, 82 to 83 (GD), Ser-87, 89 to 92 (NIST), 107 to 115 (KHGNRSITS), and Ser-119. Gly-79 provides a ligand contact to anthranilate. Ser-91 contributes to the Mg(2+) binding site. Residue Asn-110 coordinates anthranilate. Residue Arg-165 participates in anthranilate binding. Mg(2+) contacts are provided by Asp-224 and Glu-225.

This sequence belongs to the anthranilate phosphoribosyltransferase family. Homodimer. Mg(2+) is required as a cofactor.

The enzyme catalyses N-(5-phospho-beta-D-ribosyl)anthranilate + diphosphate = 5-phospho-alpha-D-ribose 1-diphosphate + anthranilate. It functions in the pathway amino-acid biosynthesis; L-tryptophan biosynthesis; L-tryptophan from chorismate: step 2/5. Catalyzes the transfer of the phosphoribosyl group of 5-phosphorylribose-1-pyrophosphate (PRPP) to anthranilate to yield N-(5'-phosphoribosyl)-anthranilate (PRA). The chain is Anthranilate phosphoribosyltransferase from Lactococcus lactis subsp. cremoris (strain MG1363).